The chain runs to 367 residues: Chorismate synthase (367 aa).

Position 48 (R48) interacts with NADP(+). Residues 125–127 (RSS), 243–244 (NA), G283, 298–302 (KPTSS), and R324 contribute to the FMN site.

Belongs to the chorismate synthase family. In terms of assembly, homotetramer. The cofactor is FMNH2.

It catalyses the reaction 5-O-(1-carboxyvinyl)-3-phosphoshikimate = chorismate + phosphate. It functions in the pathway metabolic intermediate biosynthesis; chorismate biosynthesis; chorismate from D-erythrose 4-phosphate and phosphoenolpyruvate: step 7/7. Functionally, catalyzes the anti-1,4-elimination of the C-3 phosphate and the C-6 proR hydrogen from 5-enolpyruvylshikimate-3-phosphate (EPSP) to yield chorismate, which is the branch point compound that serves as the starting substrate for the three terminal pathways of aromatic amino acid biosynthesis. This reaction introduces a second double bond into the aromatic ring system. The chain is Chorismate synthase from Psychrobacter sp. (strain PRwf-1).